Here is a 408-residue protein sequence, read N- to C-terminus: Bone morphogenetic protein 4 (408 aa).

The first 19 residues, 1-19 (MIPGNRMLMVVLLCQVLLG), serve as a signal peptide directing secretion. Positions 20-292 (GATDASLIPE…HTLTRRRAKR (273 aa)) are excised as a propeptide. Ser-91 bears the Phosphoserine mark. A disordered region spans residues 91 to 113 (SGEEEEEEQSQGTGLEYPERPAS). N-linked (GlcNAc...) asparagine glycans are attached at residues Asn-144 and Asn-209. Positions 281-307 (RGHTLTRRRAKRSPKHHPQRSRKKNKN) are disordered. Residues 284–307 (TLTRRRAKRSPKHHPQRSRKKNKN) are compositionally biased toward basic residues. 3 disulfides stabilise this stretch: Cys-308–Cys-373, Cys-337–Cys-405, and Cys-341–Cys-407. N-linked (GlcNAc...) asparagine glycans are attached at residues Asn-350 and Asn-365.

This sequence belongs to the TGF-beta family. As to quaternary structure, homodimer; disulfide-linked. Interacts with GREM2. Part of a complex consisting of TWSG1 and CHRD. Interacts with the serine proteases, HTRA1 and HTRA3; the interaction with either inhibits BMP4-mediated signaling. The HTRA protease activity is required for this inhibition. Interacts with SOSTDC1. Interacts with FBN1 (via N-terminal domain) and FBN2. Interacts with type I receptor BMPR1A. Interacts with type II receptor BMPR2. Interacts with FSTL1; this interaction inhibits the activation of the BMP4/Smad1/5/8 signaling pathway. Interacts with SCUBE3. Interacts with TGFBR3.

The protein localises to the secreted. It localises to the extracellular space. Its subcellular location is the extracellular matrix. In terms of biological role, growth factor of the TGF-beta superfamily that plays essential roles in many developmental processes, including neurogenesis, vascular development, angiogenesis and osteogenesis. Acts in concert with PTHLH/PTHRP to stimulate ductal outgrowth during embryonic mammary development and to inhibit hair follicle induction. Initiates the canonical BMP signaling cascade by associating with type I receptor BMPR1A and type II receptor BMPR2. Once all three components are bound together in a complex at the cell surface, BMPR2 phosphorylates and activates BMPR1A. In turn, BMPR1A propagates signal by phosphorylating SMAD1/5/8 that travel to the nucleus and act as activators and repressors of transcription of target genes. Positively regulates the expression of odontogenic development regulator MSX1 via inducing the IPO7-mediated import of SMAD1 to the nucleus. Required for MSX1-mediated mesenchymal molar tooth bud development beyond the bud stage, via promoting Wnt signaling. Acts as a positive regulator of odontoblast differentiation during mesenchymal tooth germ formation, expression is repressed during the bell stage by MSX1-mediated inhibition of CTNNB1 signaling. Able to induce its own expression in dental mesenchymal cells and also in the neighboring dental epithelial cells via an MSX1-mediated pathway. Can also signal through non-canonical BMP pathways such as ERK/MAP kinase, PI3K/Akt, or SRC cascades. For example, induces SRC phosphorylation which, in turn, activates VEGFR2, leading to an angiogenic response. This is Bone morphogenetic protein 4 from Rattus norvegicus (Rat).